The primary structure comprises 391 residues: MDQFIKQDETGDLIETGMNVANHFLSAPIQGTNSLSKASIIPGVAPVLIGNPEQKNIQHPTASHQGSKSKGRGSGVRSIIVPPSEAGNGGTQIPEPLFAQTGQGGIVTTVYQDPTIQPTGSYRSVELTKIGKERMINRFVEKPRISTPVTEFKRGGPGAAAQGQTIQEEGIDGNGASAGSKERSGSLSGATLYAHLSLPQQDSTPANVGIAPQSAISANEIMDLLRGMDARLQHLEQKVDKVLAQGSMVTQIKNELSTVKTTLATIEGMMATVKIMDPGNPTGVPVDELRRSFSDHVTIVSGPGDVSFSSSEEPTLYLDELARPVSKPRPAKQTKPQPVKDLAGRKVMITKMITDCVANPQMKQAFEQRLAKASTEDALNDIKRDIIRSAI.

Residues T10 and T16 each carry the phosphothreonine modification. Positions 54–65 are enriched in polar residues; that stretch reads QKNIQHPTASHQ. 2 disordered regions span residues 54–98 and 148–184; these read QKNI…EPLF and PVTEFKRGGPGAAAQGQTIQEEGIDGNGASAGSKERS. S69 bears the Phosphoserine mark. Phosphothreonine occurs at positions 91, 150, and 165. Position 188 is a phosphoserine (S188). A multimerization region spans residues 216 to 279; the sequence is ISANEIMDLL…MATVKIMDPG (64 aa). Residues 218–245 adopt a coiled-coil conformation; it reads ANEIMDLLRGMDARLQHLEQKVDKVLAQ. T250 is modified (phosphothreonine). S257 is subject to Phosphoserine. Phosphothreonine is present on residues T258 and T282. Phosphoserine is present on residues S292 and S294. T298 is subject to Phosphothreonine. S301 and S374 each carry phosphoserine. The segment at 343–391 is interaction with the nucleoprotein; sequence AGRKVMITKMITDCVANPQMKQAFEQRLAKASTEDALNDIKRDIIRSAI. At T375 the chain carries Phosphothreonine.

It belongs to the rubulavirus/avulavirus P protein family. In terms of assembly, homotetramer. Interacts (via multimerization domain) with polymerase L; this interaction forms the polymerase L-P complex. Interacts (via N-terminus) with N0 (via Ncore); this interaction allows P to chaperon N0 to avoid N polymerization before encapsidation. Interacts (via C-terminus) with N-RNA template; this interaction positions the polymerase on the template for both transcription and replication. Interacts with host RPS6KB1 kinase; this interaction may play a role in the viral replication and transcription.

In terms of biological role, essential cofactor of the RNA polymerase L that plays a central role in the transcription and replication by forming the polymerase complex with RNA polymerase L and recruiting L to the genomic N-RNA template for RNA synthesis. Also plays a central role in the encapsidation of nascent RNA chains by forming the encapsidation complex with the nucleocapsid protein N (N-P complex). Acts as a chaperone for newly synthesized free N protein, so-called N0, allowing encapsidation of nascent RNA chains during replication. The nucleoprotein protein N prevents excessive phosphorylation of P, which leads to down-regulation of viral transcription/ replication. Participates, together with N, in the formation of viral factories (viroplasms), which are large inclusions in the host cytoplasm where replication takes place. The chain is Phosphoprotein from Mumps virus (strain Enders) (MuV).